The primary structure comprises 313 residues: Metal ABC transporter substrate-binding lipoprotein (313 aa).

Residues 1-23 form the signal peptide; the sequence is MIEKYKNILITFIALAAIVFLVG. Cys-24 carries the N-palmitoyl cysteine lipid modification. Cys-24 is lipidated: S-diacylglycerol cysteine. Residues His-71, His-143, Glu-209, and Asp-284 each contribute to the Zn(2+) site.

This sequence belongs to the bacterial solute-binding protein 9 family. Lipoprotein receptor antigen (Lrai) subfamily.

It is found in the cell membrane. Part of an ATP-driven transport system for a metal; probably for manganese. The polypeptide is Metal ABC transporter substrate-binding lipoprotein (mtsA) (Lactococcus lactis subsp. lactis (strain IL1403) (Streptococcus lactis)).